The following is a 338-amino-acid chain: GTPase Obg (338 aa).

Residues 1-159 enclose the Obg domain; the sequence is MQFIDEVKIH…RWLRLELKLL (159 aa). Residues 160 to 331 enclose the OBG-type G domain; the sequence is ADVGLLGFPN…LLDEIARSLW (172 aa). GTP is bound by residues 166–173, 191–195, 213–216, 283–286, and 312–314; these read GFPNVGKS, FTTLK, DIPG, NKMD, and SAA. Residues Ser-173 and Thr-193 each coordinate Mg(2+).

It belongs to the TRAFAC class OBG-HflX-like GTPase superfamily. OBG GTPase family. In terms of assembly, monomer. It depends on Mg(2+) as a cofactor.

Its subcellular location is the cytoplasm. In terms of biological role, an essential GTPase which binds GTP, GDP and possibly (p)ppGpp with moderate affinity, with high nucleotide exchange rates and a fairly low GTP hydrolysis rate. Plays a role in control of the cell cycle, stress response, ribosome biogenesis and in those bacteria that undergo differentiation, in morphogenesis control. The sequence is that of GTPase Obg from Geobacter sulfurreducens (strain ATCC 51573 / DSM 12127 / PCA).